A 57-amino-acid polypeptide reads, in one-letter code: Andropin (57 aa).

A signal peptide spans 1–23 (MKYFVVLVVLALILAITVGPSDA).

It belongs to the andropin family. Ejaculatory duct of adult males.

It localises to the secreted. Male-specific peptide with moderate activity against Gram-positive bacteria. The sequence is that of Andropin (Anp) from Drosophila mauritiana (Fruit fly).